A 349-amino-acid polypeptide reads, in one-letter code: Transcription elongation factor A protein 3 (349 aa).

Positions 5 to 82 constitute a TFIIS N-terminal domain; that stretch reads EELLRIAKKL…RNWKQLLDSP (78 aa). The segment at 80 to 170 is disordered; the sequence is DSPATPKGEK…RTPSSPSSPT (91 aa). The segment covering 101 to 110 has biased composition (basic and acidic residues); sequence KGLDCSDWKP. Ser-115 is subject to Phosphoserine. Basic and acidic residues predominate over residues 121-133; sequence RVEEPKDRRDSVD. Composition is skewed to low complexity over residues 134-144 and 160-170; these read SKSSATSSPKR and PRTPSSPSSPT. At Ser-141 the chain carries Phosphoserine. In terms of domain architecture, TFIIS central spans 188–304; it reads VRDKCVEMLS…EHQMAKTGGT (117 aa). Residues 307-347 form a TFIIS-type zinc finger; that stretch reads DLFQCSKCKKKNCTYNQVQTRSADEPMTTFVLCNECGNRWK. Positions 311, 314, 339, and 342 each coordinate Zn(2+).

Belongs to the TFS-II family.

It localises to the nucleus. Necessary for efficient RNA polymerase II transcription elongation past template-encoded arresting sites. The arresting sites in DNA have the property of trapping a certain fraction of elongating RNA polymerases that pass through, resulting in locked ternary complexes. Cleavage of the nascent transcript by S-II allows the resumption of elongation from the new 3'-terminus. In Bos taurus (Bovine), this protein is Transcription elongation factor A protein 3 (TCEA3).